The primary structure comprises 506 residues: Protein nucleotidyltransferase YdiU (506 aa).

ATP contacts are provided by Gly95, Gly97, Arg98, Lys118, Asp130, Gly131, Arg181, and Arg188. Residue Asp257 is the Proton acceptor of the active site. Positions 258 and 267 each coordinate Mg(2+). Position 267 (Asp267) interacts with ATP. Residues 487–506 (KHYQDAPTPDQRVKQTFCGT) are disordered.

Belongs to the SELO family. The cofactor is Mg(2+). It depends on Mn(2+) as a cofactor.

The enzyme catalyses L-seryl-[protein] + ATP = 3-O-(5'-adenylyl)-L-seryl-[protein] + diphosphate. It carries out the reaction L-threonyl-[protein] + ATP = 3-O-(5'-adenylyl)-L-threonyl-[protein] + diphosphate. The catalysed reaction is L-tyrosyl-[protein] + ATP = O-(5'-adenylyl)-L-tyrosyl-[protein] + diphosphate. It catalyses the reaction L-histidyl-[protein] + UTP = N(tele)-(5'-uridylyl)-L-histidyl-[protein] + diphosphate. The enzyme catalyses L-seryl-[protein] + UTP = O-(5'-uridylyl)-L-seryl-[protein] + diphosphate. It carries out the reaction L-tyrosyl-[protein] + UTP = O-(5'-uridylyl)-L-tyrosyl-[protein] + diphosphate. Functionally, nucleotidyltransferase involved in the post-translational modification of proteins. It can catalyze the addition of adenosine monophosphate (AMP) or uridine monophosphate (UMP) to a protein, resulting in modifications known as AMPylation and UMPylation. In Shewanella denitrificans (strain OS217 / ATCC BAA-1090 / DSM 15013), this protein is Protein nucleotidyltransferase YdiU.